We begin with the raw amino-acid sequence, 693 residues long: Glycine--tRNA ligase beta subunit (693 aa).

Belongs to the class-II aminoacyl-tRNA synthetase family. Tetramer of two alpha and two beta subunits.

The protein localises to the cytoplasm. It carries out the reaction tRNA(Gly) + glycine + ATP = glycyl-tRNA(Gly) + AMP + diphosphate. The chain is Glycine--tRNA ligase beta subunit from Shouchella clausii (strain KSM-K16) (Alkalihalobacillus clausii).